Reading from the N-terminus, the 431-residue chain is Glutamate-1-semialdehyde 2,1-aminomutase (431 aa).

Position 269 is an N6-(pyridoxal phosphate)lysine (K269).

Belongs to the class-III pyridoxal-phosphate-dependent aminotransferase family. HemL subfamily. As to quaternary structure, homodimer. The cofactor is pyridoxal 5'-phosphate.

It is found in the cytoplasm. The catalysed reaction is (S)-4-amino-5-oxopentanoate = 5-aminolevulinate. The protein operates within porphyrin-containing compound metabolism; protoporphyrin-IX biosynthesis; 5-aminolevulinate from L-glutamyl-tRNA(Glu): step 2/2. The protein is Glutamate-1-semialdehyde 2,1-aminomutase of Tolumonas auensis (strain DSM 9187 / NBRC 110442 / TA 4).